The sequence spans 503 residues: Cobyric acid synthase (503 aa).

The GATase cobBQ-type domain occupies 255–444 (DIDIAVIRYP…FHDLFHNDAF (190 aa)). Cys337 (nucleophile) is an active-site residue. The active site involves His436.

Belongs to the CobB/CobQ family. CobQ subfamily.

It participates in cofactor biosynthesis; adenosylcobalamin biosynthesis. Catalyzes amidations at positions B, D, E, and G on adenosylcobyrinic A,C-diamide. NH(2) groups are provided by glutamine, and one molecule of ATP is hydrogenolyzed for each amidation. The polypeptide is Cobyric acid synthase (Geobacillus sp. (strain WCH70)).